We begin with the raw amino-acid sequence, 97 residues long: Serine protease inhibitor Kazal-type 13 (97 aa).

Residues 1–26 form the signal peptide; it reads MTRRGCWPHRIIFSLILLTWTHVTLA. In terms of domain architecture, Kazal-like spans 36 to 97; sequence NWPKPPCKMY…IEFVKYGKCE (62 aa). Intrachain disulfides connect Cys42/Cys78, Cys56/Cys75, and Cys64/Cys96.

As to expression, restricted to the epididymis, with highest levels in the initial segment, including epithelial cells, lumen, and sperm (at protein level). Localizes to the sperm heads, where it is restricted to the acrosomal region in epididymal spermatozoa, but not in testicular spermatozoa (at protein level).

It is found in the secreted. Its function is as follows. May be a serine protease inhibitor. Essential for sperm maturation and fertility. Inhibits sperm acrosome reaction, protecting sperm from premature reaction. The polypeptide is Serine protease inhibitor Kazal-type 13 (Spink13) (Rattus norvegicus (Rat)).